The primary structure comprises 148 residues: Large ribosomal subunit protein uL15 (148 aa).

Positions 1–61 are disordered; the sequence is MELNELRPAV…GGQMPMQRRL (61 aa). The segment covering 30–39 has biased composition (basic residues); sequence TATKGHKGQK.

The protein belongs to the universal ribosomal protein uL15 family. Part of the 50S ribosomal subunit.

Binds to the 23S rRNA. This chain is Large ribosomal subunit protein uL15, found in Geobacter sulfurreducens (strain ATCC 51573 / DSM 12127 / PCA).